A 266-amino-acid polypeptide reads, in one-letter code: Glucagon-1 (266 aa).

The signal sequence occupies residues 1–20 (MKSTCYMIGILLMILQNTYQ). Propeptides lie at residues 21 to 50 (SPVPETDANSRSVKAARNEAVDDSEQLKEV), 84 to 95 (SGELSRRNADYE), 136 to 140 (NAEFE), 175 to 178 (IRYS), 213 to 224 (NFSEVHSVEEMD), and 261 to 266 (DLLEEQ). Positions 23–32 (VPETDANSRS) are enriched in polar residues. A disordered region spans residues 23-44 (VPETDANSRSVKAARNEAVDDS).

Belongs to the glucagon family.

The protein localises to the secreted. Promotes hydrolysis of glycogen and lipids, and raises the blood sugar level. In Xenopus laevis (African clawed frog), this protein is Glucagon-1 (gcg1).